A 257-amino-acid polypeptide reads, in one-letter code: 5'-nucleotidase SurE (257 aa).

Asp9, Asp10, Ser40, and Asn93 together coordinate a divalent metal cation.

The protein belongs to the SurE nucleotidase family. The cofactor is a divalent metal cation.

It is found in the cytoplasm. The enzyme catalyses a ribonucleoside 5'-phosphate + H2O = a ribonucleoside + phosphate. Nucleotidase that shows phosphatase activity on nucleoside 5'-monophosphates. This Campylobacter hominis (strain ATCC BAA-381 / DSM 21671 / CCUG 45161 / LMG 19568 / NCTC 13146 / CH001A) protein is 5'-nucleotidase SurE.